Reading from the N-terminus, the 474-residue chain is tRNA-2-methylthio-N(6)-dimethylallyladenosine synthase (474 aa).

An MTTase N-terminal domain is found at 3–120 (QKLHIKTWGC…LPEMINQIRG (118 aa)). 6 residues coordinate [4Fe-4S] cluster: C12, C49, C83, C157, C161, and C164. The 233-residue stretch at 143–375 (KAEGPTAFVS…QQRINNQAAK (233 aa)) folds into the Radical SAM core domain. Residues 378-441 (RAMLGTEQRV…TNSLRGDVIR (64 aa)) enclose the TRAM domain.

Belongs to the methylthiotransferase family. MiaB subfamily. Monomer. It depends on [4Fe-4S] cluster as a cofactor.

The protein localises to the cytoplasm. The catalysed reaction is N(6)-dimethylallyladenosine(37) in tRNA + (sulfur carrier)-SH + AH2 + 2 S-adenosyl-L-methionine = 2-methylsulfanyl-N(6)-dimethylallyladenosine(37) in tRNA + (sulfur carrier)-H + 5'-deoxyadenosine + L-methionine + A + S-adenosyl-L-homocysteine + 2 H(+). In terms of biological role, catalyzes the methylthiolation of N6-(dimethylallyl)adenosine (i(6)A), leading to the formation of 2-methylthio-N6-(dimethylallyl)adenosine (ms(2)i(6)A) at position 37 in tRNAs that read codons beginning with uridine. The chain is tRNA-2-methylthio-N(6)-dimethylallyladenosine synthase from Actinobacillus succinogenes (strain ATCC 55618 / DSM 22257 / CCUG 43843 / 130Z).